The following is a 210-amino-acid chain: High frequency lysogenization protein HflD homolog (210 aa).

A coiled-coil region spans residues 103 to 130 (EAKAKLAERLQQIERQLPLYENDIMADQ).

The protein belongs to the HflD family.

Its subcellular location is the cytoplasm. It is found in the cell inner membrane. The sequence is that of High frequency lysogenization protein HflD homolog from Actinobacillus pleuropneumoniae serotype 5b (strain L20).